Reading from the N-terminus, the 415-residue chain is uncharacterized protein (415 aa).

Disordered regions lie at residues 329-351 and 388-415; these read KFNKPNNDDLQNESGDDSETESS and KSMMNKSESNKKSNRKSNKRSNKNIITL. Over residues 338–348 the composition is skewed to acidic residues; it reads LQNESGDDSET. Basic residues predominate over residues 399 to 409; it reads KSNRKSNKRSN.

This is an uncharacterized protein from Acanthamoeba polyphaga mimivirus (APMV).